A 148-amino-acid polypeptide reads, in one-letter code: UPF0756 membrane protein ETA_17460 (148 aa).

The next 4 membrane-spanning stretches (helical) occupy residues 14 to 34 (ALSYFSHNITVTIALLVLIVI), 51 to 71 (MTVGIIILTIGVMAPIASGTI), 80 to 100 (FLHWKSLTAIAIGIFVSWLGG), and 112 to 132 (VVGGLLIGTIIGVSLFRGVPV).

This sequence belongs to the UPF0756 family.

It is found in the cell membrane. This Erwinia tasmaniensis (strain DSM 17950 / CFBP 7177 / CIP 109463 / NCPPB 4357 / Et1/99) protein is UPF0756 membrane protein ETA_17460.